Reading from the N-terminus, the 304-residue chain is Capsid protein (304 aa).

Basic and acidic residues-rich tracts occupy residues Met-1–Arg-24 and Phe-32–Leu-54. Residues Met-1 to Leu-54 are disordered.

It belongs to the potexviruses coat protein family.

The protein resides in the virion. In terms of biological role, required for genome encapsidation. Forms ribonucleoprotein complexes along with TGB1 helicase and viral RNA. The polypeptide is Capsid protein (Potato virus M (strain Russian) (PVM)).